Consider the following 494-residue polypeptide: MASRILGSIKEEVTCPICLELLTEPLSLDCGHSFCQACITANHKESMLHQGERSCPLCRLPYQSENLRPNRHLASIVERLREVMLRPEERQNVDHCARHGEKLLLFCEQDGNIICWLCERSQEHRGHNTFLVEEVAQKYREKLQVALETMRQKQQDAEKLEADVRQEQASWKIQIQNDKTNIMAEFKQLRDILDCEESNELQNLEKEEKNILKRLVQSENDMVLQTQSVRVLISDLERRLQGSVVELLQDVDGVIKRIEKVTLQKPKTFLNEKRRVFRAPDLKRMLQVLKELTEVQRYWAHVTLVPSHPSYTIISEDGRQVRYQKPIRHLLVKVQYFYGVLGSPSITSGKHYWEVDVSNKRAWTLGVCVSLKCTANQSVSGTENYQPKNGYWVIGLRNAGNYRAFQSSFEFRDFLAGSRLTLSPPLIVPLFMTICPNRVGVFLDYEARTISFFNVTSNGFLIYKFSDCHFSYPVFPYFNPMTCELPMTLCSPRS.

Position 2 is an N-acetylalanine (Ala-2). The RING-type zinc-finger motif lies at 15-59 (CPICLELLTEPLSLDCGHSFCQACITANHKESMLHQGERSCPLCR). Residues 91–132 (QNVDHCARHGEKLLLFCEQDGNIICWLCERSQEHRGHNTFLV) form a B box-type zinc finger. Cys-96, His-99, Cys-118, and His-124 together coordinate Zn(2+). Residues 132–223 (VEEVAQKYRE…RLVQSENDMV (92 aa)) adopt a coiled-coil conformation. Positions 186–199 (FKQLRDILDCEESN) are required for interaction with GABARAP and for autophagy. The 215-residue stretch at 280–494 (PDLKRMLQVL…LPMTLCSPRS (215 aa)) folds into the B30.2/SPRY domain.

The protein belongs to the TRIM/RBCC family. In terms of assembly, can form homodimers and homotrimers. In addition to lower-order dimerization, also exhibits a higher-order multimerization and both low- and high-order multimerizations are essential for its restriction activity. Interacts with BTBD1 and BTBD2. Interacts with PSMC4, PSMC5, PSMD7 and HSPA8/HSC70. Interacts (via B30.2/SPRY domain) with HSPA1A/B. Interacts with PSMC2, MAP3K7/TAK1, TAB2 and TAB3. Interacts with SQSTM1. Interacts with TRIM6 and TRIM34. Interacts with ULK1 (phosphorylated form), GABARAP, GABARAPL1, GABARAPL2, MAP1LC3A, MAP1LC3C and BECN1. Post-translationally, degraded in a proteasome-independent fashion in the absence of viral infection but in a proteasome-dependent fashion following exposure to restriction sensitive virus. Autoubiquitinated in a RING finger- and UBE2D2-dependent manner. Monoubiquitinated by TRIM21. Deubiquitinated by Yersinia YopJ. Ubiquitination may not lead to proteasomal degradation.

The protein localises to the cytoplasm. The protein resides in the nucleus. It catalyses the reaction S-ubiquitinyl-[E2 ubiquitin-conjugating enzyme]-L-cysteine + [acceptor protein]-L-lysine = [E2 ubiquitin-conjugating enzyme]-L-cysteine + N(6)-ubiquitinyl-[acceptor protein]-L-lysine.. Its pathway is protein modification; protein ubiquitination. In terms of biological role, capsid-specific restriction factor that prevents infection from non-host-adapted retroviruses. Blocks viral replication early in the life cycle, after viral entry but before reverse transcription. In addition to acting as a capsid-specific restriction factor, also acts as a pattern recognition receptor that activates innate immune signaling in response to the retroviral capsid lattice. Binding to the viral capsid triggers its E3 ubiquitin ligase activity, and in concert with the heterodimeric ubiquitin conjugating enzyme complex UBE2V1-UBE2N (also known as UBC13-UEV1A complex) generates 'Lys-63'-linked polyubiquitin chains, which in turn are catalysts in the autophosphorylation of the MAP3K7/TAK1 complex (includes TAK1, TAB2, and TAB3). Activation of the MAP3K7/TAK1 complex by autophosphorylation results in the induction and expression of NF-kappa-B and MAPK-responsive inflammatory genes, thereby leading to an innate immune response in the infected cell. Restricts infection by simian immunodeficiency virus (SIV-mac). Plays a role in regulating autophagy through activation of autophagy regulator BECN1 by causing its dissociation from its inhibitors BCL2 and TAB2. The sequence is that of Tripartite motif-containing protein 5 (TRIM5) from Saimiri sciureus (Common squirrel monkey).